Consider the following 577-residue polypeptide: Arginine--tRNA ligase (577 aa).

The 'HIGH' region motif lies at 122 to 132 (PNVAKEMHVGH).

This sequence belongs to the class-I aminoacyl-tRNA synthetase family. In terms of assembly, monomer.

It is found in the cytoplasm. The catalysed reaction is tRNA(Arg) + L-arginine + ATP = L-arginyl-tRNA(Arg) + AMP + diphosphate. This chain is Arginine--tRNA ligase, found in Shigella flexneri serotype 5b (strain 8401).